The primary structure comprises 349 residues: Isopentenyl-diphosphate delta-isomerase (349 aa).

9–10 is a binding site for substrate; that stretch reads RK. FMN-binding positions include 65-67, serine 95, and asparagine 124; that span reads AMT. Residue 95–97 coordinates substrate; the sequence is STH. Glutamine 154 lines the substrate pocket. Position 155 (glutamate 155) interacts with Mg(2+). Residues lysine 186, serine 211, threonine 216, 262 to 264, and 283 to 284 contribute to the FMN site; these read GLR and SR.

It belongs to the IPP isomerase type 2 family. In terms of assembly, homooctamer. Dimer of tetramers. FMN serves as cofactor. The cofactor is NADPH. Mg(2+) is required as a cofactor.

The protein localises to the cytoplasm. It catalyses the reaction isopentenyl diphosphate = dimethylallyl diphosphate. Its function is as follows. Involved in the biosynthesis of isoprenoids. Catalyzes the 1,3-allylic rearrangement of the homoallylic substrate isopentenyl (IPP) to its allylic isomer, dimethylallyl diphosphate (DMAPP). The protein is Isopentenyl-diphosphate delta-isomerase of Staphylococcus aureus (strain JH1).